The following is a 628-amino-acid chain: Biosynthetic arginine decarboxylase (628 aa).

Lysine 99 carries the N6-(pyridoxal phosphate)lysine modification. 279–289 contacts substrate; that stretch reads VDVGGGLGIDY.

The protein belongs to the Orn/Lys/Arg decarboxylase class-II family. SpeA subfamily. Mg(2+) is required as a cofactor. The cofactor is pyridoxal 5'-phosphate.

It carries out the reaction L-arginine + H(+) = agmatine + CO2. In terms of biological role, catalyzes the biosynthesis of agmatine from arginine. In Xanthomonas campestris pv. campestris (strain ATCC 33913 / DSM 3586 / NCPPB 528 / LMG 568 / P 25), this protein is Biosynthetic arginine decarboxylase.